The primary structure comprises 213 residues: Triosephosphate isomerase (213 aa).

7 to 9 contributes to the substrate binding site; that stretch reads NLK. The active-site Electrophile is the His88. Residue Glu136 is the Proton acceptor of the active site. Residues Ile141 and Gly174 each contribute to the substrate site.

The protein belongs to the triosephosphate isomerase family. In terms of assembly, homotetramer; dimer of dimers.

The protein localises to the cytoplasm. The catalysed reaction is D-glyceraldehyde 3-phosphate = dihydroxyacetone phosphate. It participates in carbohydrate biosynthesis; gluconeogenesis. Its pathway is carbohydrate degradation; glycolysis; D-glyceraldehyde 3-phosphate from glycerone phosphate: step 1/1. Involved in the gluconeogenesis. Catalyzes stereospecifically the conversion of dihydroxyacetone phosphate (DHAP) to D-glyceraldehyde-3-phosphate (G3P). The polypeptide is Triosephosphate isomerase (Thermoplasma volcanium (strain ATCC 51530 / DSM 4299 / JCM 9571 / NBRC 15438 / GSS1)).